The chain runs to 197 residues: Probable molybdenum cofactor guanylyltransferase (197 aa).

GTP is bound by residues 9-11 (LAG), lysine 21, aspartate 65, and aspartate 94. Aspartate 94 is a binding site for Mg(2+).

This sequence belongs to the MobA family. Requires Mg(2+) as cofactor.

The protein localises to the cytoplasm. It catalyses the reaction Mo-molybdopterin + GTP + H(+) = Mo-molybdopterin guanine dinucleotide + diphosphate. Transfers a GMP moiety from GTP to Mo-molybdopterin (Mo-MPT) cofactor (Moco or molybdenum cofactor) to form Mo-molybdopterin guanine dinucleotide (Mo-MGD) cofactor. This is Probable molybdenum cofactor guanylyltransferase from Carboxydothermus hydrogenoformans (strain ATCC BAA-161 / DSM 6008 / Z-2901).